The following is a 473-amino-acid chain: Dihydrolipoyl dehydrogenase (473 aa).

Residues 36-45 (ERYDKLGGVC), Lys-54, and Ala-117 contribute to the FAD site. Cysteines 45 and 50 form a disulfide. NAD(+) is bound by residues 182–186 (GSGII), Asp-205, and 270–273 (AIGR). FAD is bound by residues Asp-313 and Ala-321. The Proton acceptor role is filled by His-445.

This sequence belongs to the class-I pyridine nucleotide-disulfide oxidoreductase family. Homodimer. It depends on FAD as a cofactor.

It localises to the cytoplasm. The catalysed reaction is N(6)-[(R)-dihydrolipoyl]-L-lysyl-[protein] + NAD(+) = N(6)-[(R)-lipoyl]-L-lysyl-[protein] + NADH + H(+). In terms of biological role, lipoamide dehydrogenase is a component of the alpha-ketoacid dehydrogenase complexes. This is Dihydrolipoyl dehydrogenase (lpdA) from Buchnera aphidicola subsp. Acyrthosiphon pisum (strain APS) (Acyrthosiphon pisum symbiotic bacterium).